The sequence spans 61 residues: Photosystem II reaction center protein Z (61 aa).

Helical transmembrane passes span 5 to 25 and 38 to 58; these read LTALLVLISLGLIVTVPVALA and TKGFQAWVALVLVIAAADGVA.

It belongs to the PsbZ family. As to quaternary structure, PSII is composed of 1 copy each of membrane proteins PsbA, PsbB, PsbC, PsbD, PsbE, PsbF, PsbH, PsbI, PsbJ, PsbK, PsbL, PsbM, PsbT, PsbX, PsbY, PsbZ, Psb30/Ycf12, at least 3 peripheral proteins of the oxygen-evolving complex and a large number of cofactors. It forms dimeric complexes.

The protein localises to the plastid. The protein resides in the chloroplast thylakoid membrane. In terms of biological role, may control the interaction of photosystem II (PSII) cores with the light-harvesting antenna, regulates electron flow through the 2 photosystem reaction centers. PSII is a light-driven water plastoquinone oxidoreductase, using light energy to abstract electrons from H(2)O, generating a proton gradient subsequently used for ATP formation. This Phaeodactylum tricornutum (strain CCAP 1055/1) protein is Photosystem II reaction center protein Z.